Here is a 539-residue protein sequence, read N- to C-terminus: CTP synthase (539 aa).

An amidoligase domain region spans residues 1-272 (MTLRSKMTKY…AQIILSHFKI (272 aa)). CTP is bound at residue S19. S19 contributes to the UTP binding site. 20–25 (GLGKGV) serves as a coordination point for ATP. Y60 is a binding site for L-glutamine. Residue D77 coordinates ATP. Mg(2+) contacts are provided by D77 and E147. Residues 154 to 156 (DIE), 193 to 198 (KSKPTQ), and K229 contribute to the CTP site. UTP-binding positions include 193 to 198 (KSKPTQ) and K229. The region spanning 298-539 (KILMVGKYVE…SFLRVLIKNN (242 aa)) is the Glutamine amidotransferase type-1 domain. Position 360 (G360) interacts with L-glutamine. C387 (nucleophile; for glutamine hydrolysis) is an active-site residue. Residues 388-391 (LGFQ), E410, and R469 contribute to the L-glutamine site. Residues H514 and E516 contribute to the active site.

The protein belongs to the CTP synthase family. In terms of assembly, homotetramer.

It carries out the reaction UTP + L-glutamine + ATP + H2O = CTP + L-glutamate + ADP + phosphate + 2 H(+). It catalyses the reaction L-glutamine + H2O = L-glutamate + NH4(+). The enzyme catalyses UTP + NH4(+) + ATP = CTP + ADP + phosphate + 2 H(+). It functions in the pathway pyrimidine metabolism; CTP biosynthesis via de novo pathway; CTP from UDP: step 2/2. Its activity is regulated as follows. Allosterically activated by GTP, when glutamine is the substrate; GTP has no effect on the reaction when ammonia is the substrate. The allosteric effector GTP functions by stabilizing the protein conformation that binds the tetrahedral intermediate(s) formed during glutamine hydrolysis. Inhibited by the product CTP, via allosteric rather than competitive inhibition. Catalyzes the ATP-dependent amination of UTP to CTP with either L-glutamine or ammonia as the source of nitrogen. Regulates intracellular CTP levels through interactions with the four ribonucleotide triphosphates. The sequence is that of CTP synthase from Mycoplasmopsis pulmonis (strain UAB CTIP) (Mycoplasma pulmonis).